Consider the following 370-residue polypeptide: Peptide chain release factor 1 (370 aa).

N5-methylglutamine is present on Q239.

Belongs to the prokaryotic/mitochondrial release factor family. Post-translationally, methylated by PrmC. Methylation increases the termination efficiency of RF1.

The protein resides in the cytoplasm. In terms of biological role, peptide chain release factor 1 directs the termination of translation in response to the peptide chain termination codons UAG and UAA. The protein is Peptide chain release factor 1 of Bacteroides thetaiotaomicron (strain ATCC 29148 / DSM 2079 / JCM 5827 / CCUG 10774 / NCTC 10582 / VPI-5482 / E50).